A 286-amino-acid polypeptide reads, in one-letter code: ATP synthase gamma chain (286 aa).

Belongs to the ATPase gamma chain family. In terms of assembly, F-type ATPases have 2 components, CF(1) - the catalytic core - and CF(0) - the membrane proton channel. CF(1) has five subunits: alpha(3), beta(3), gamma(1), delta(1), epsilon(1). CF(0) has three main subunits: a, b and c.

The protein localises to the cell inner membrane. In terms of biological role, produces ATP from ADP in the presence of a proton gradient across the membrane. The gamma chain is believed to be important in regulating ATPase activity and the flow of protons through the CF(0) complex. The sequence is that of ATP synthase gamma chain from Fuscovulum blasticum (Rhodobacter blasticus).